The sequence spans 852 residues: Leucine--tRNA ligase (852 aa).

Positions 42 to 52 (PYPSGKLHMGH) match the 'HIGH' region motif. A disordered region spans residues 586–606 (NKYVPADQVDPNDPKDPETGE). The 'KMSKS' region signature appears at 614–618 (KMSKS). Lys617 provides a ligand contact to ATP.

Belongs to the class-I aminoacyl-tRNA synthetase family.

Its subcellular location is the cytoplasm. The enzyme catalyses tRNA(Leu) + L-leucine + ATP = L-leucyl-tRNA(Leu) + AMP + diphosphate. This chain is Leucine--tRNA ligase, found in Picosynechococcus sp. (strain ATCC 27264 / PCC 7002 / PR-6) (Agmenellum quadruplicatum).